Here is a 229-residue protein sequence, read N- to C-terminus: Coiled-coil domain-containing protein 134 (229 aa).

The N-terminal stretch at 1–22 is a signal peptide; sequence MDLLQFLAFLFVLLLSGMGATG. A short sequence motif (prevents secretion from ER) is located at residue N148. An N-linked (GlcNAc...) asparagine glycan is attached at N148. The tract at residues 193 to 229 is disordered; sequence TDPFQKALREEEKRRKKEEKRKEIRKGPRISRSQSEL. A coiled-coil region spans residues 196-218; the sequence is FQKALREEEKRRKKEEKRKEIRK. The short motif at 206–213 is the Nuclear localization signal element; it reads RRKKEEKR.

The protein belongs to the CCDC134 family. As to quaternary structure, interacts with TADA2A. Associates with the PCAF complex via TADA2A binding. In terms of processing, O-glycosylated, with additional sialic acid modifications. Expressed in cervical gland, cervical squamous epithelium, endometrium, stomach, kidney distal convoluted tubule, spermatogenic cells in testis, mammary gland, liver and striated muscle (at protein level). Also detected in placenta. Highest expression in testis relative to other tissues. Detected in T cells and dendritic cells; highly expressed in activated CD8(+) T cells, and also expressed at lower levels in CD4(+) T cells.

The protein localises to the endoplasmic reticulum lumen. The protein resides in the secreted. It localises to the cytoplasm. Its subcellular location is the nucleus. In terms of biological role, molecular adapter required to prevent protein hyperglycosylation of HSP90B1: during translation, associates with nascent HSP90B1 and the STT3A catalytic component of the OST-A complex and tethers them to a specialized translocon that forms a microenvironment for HSP90B1 folding. In the CCDC134-containing translocon, STT3A associates with the SRT pseudosubstrate motif of HSP90B1, preventing access to facultative glycosylation sites until folding is completed, preventing hyperglycosylation and subsequent degradation of HSP90B1. In extracellular secreted form, promotes proliferation and activation of CD8(+) T-cells, suggesting a cytokine-like function. May inhibit ERK and JNK signaling activity. May suppress cell migration and invasion activity, via its effects on ERK and JNK signaling. May also localize in the nucleus: enhances stability of the PCAF histone acetyltransferase (HAT) complex member TADA2A and thus promotes PCAF-mediated histone acetyltransferase activity. Has a critical role in the regulation of osteogenesis and bone development. In Homo sapiens (Human), this protein is Coiled-coil domain-containing protein 134.